Consider the following 141-residue polypeptide: Acetyltransferase YpeA (141 aa).

Positions 1–141 constitute an N-acetyltransferase domain; the sequence is MEIRVFRQED…GKRLIEDEEY (141 aa).

Belongs to the acetyltransferase family. YpeA subfamily.

The protein is Acetyltransferase YpeA (ypeA) of Escherichia coli (strain K12).